We begin with the raw amino-acid sequence, 325 residues long: Forkhead box protein B1 (325 aa).

Residues 12–103 (QKPPYSYISL…GDMFENGSFL (92 aa)) constitute a DNA-binding region (fork-head). A compositionally biased stretch (low complexity) spans 284 to 309 (LSNSPPSLSPTSSQTATSQSSPATPS). The tract at residues 284–325 (LSNSPPSLSPTSSQTATSQSSPATPSETLTSPASALHSVAVH) is disordered.

In terms of tissue distribution, expressed widespread in the early developing ventricular zone of the neural tube and later restricted to areas of the spinal cord, hindbrain, thalamus and hypothalamus. Expressed in epithelial cells of developing and adult mammary glands.

Its subcellular location is the nucleus. Functionally, transcription factor expressed by neural progenitor cells in specific regions of the embryonic neuroepithelium. Essential for the mammillary nuclei maintenance. Negatively regulates the proliferation of oligodendrocyte progenitors and promotes oligodendrocyte maturation. Also expressed in mammary glands, plays a role in lactation, controls development of mammary glands and the inferior colliculi of the midbrain in the central nervous system that regulates the milk-ejection reflex. The sequence is that of Forkhead box protein B1 (Foxb1) from Mus musculus (Mouse).